Reading from the N-terminus, the 439-residue chain is 3-phosphoshikimate 1-carboxyvinyltransferase (439 aa).

3-phosphoshikimate contacts are provided by Lys27, Ser28, and Arg32. Lys27 contributes to the phosphoenolpyruvate binding site. 2 residues coordinate phosphoenolpyruvate: Gly101 and Arg130. Positions 175, 177, 326, and 353 each coordinate 3-phosphoshikimate. Gln177 serves as a coordination point for phosphoenolpyruvate. Asp326 (proton acceptor) is an active-site residue. Phosphoenolpyruvate is bound by residues Arg357 and Arg399.

Belongs to the EPSP synthase family. As to quaternary structure, monomer.

Its subcellular location is the cytoplasm. It carries out the reaction 3-phosphoshikimate + phosphoenolpyruvate = 5-O-(1-carboxyvinyl)-3-phosphoshikimate + phosphate. It functions in the pathway metabolic intermediate biosynthesis; chorismate biosynthesis; chorismate from D-erythrose 4-phosphate and phosphoenolpyruvate: step 6/7. In terms of biological role, catalyzes the transfer of the enolpyruvyl moiety of phosphoenolpyruvate (PEP) to the 5-hydroxyl of shikimate-3-phosphate (S3P) to produce enolpyruvyl shikimate-3-phosphate and inorganic phosphate. This is 3-phosphoshikimate 1-carboxyvinyltransferase from Synechococcus sp. (strain CC9311).